Here is a 205-residue protein sequence, read N- to C-terminus: High frequency lysogenization protein HflD homolog (205 aa).

The protein belongs to the HflD family.

The protein localises to the cytoplasm. It is found in the cell inner membrane. In Haemophilus influenzae (strain 86-028NP), this protein is High frequency lysogenization protein HflD homolog.